The primary structure comprises 211 residues: Peptidyl-prolyl cis-trans isomerase FKBP14 (211 aa).

Residues 1-19 (MRLFLWNAVLTLFVTSLIG) form the signal peptide. Cys38 and Cys96 form a disulfide bridge. One can recognise a PPIase FKBP-type domain in the interval 45–135 (GDLMLVHYEG…IFNIDLLEIR (91 aa)). The EF-hand 1 domain maps to 135-170 (RNGPRSHESFQEMDLNDDWKLSKDEVKAYLKKEFEK). Residues Asp148, Asn150, Asp152, Lys154, and Glu159 each coordinate Ca(2+). Residue Asn176 is glycosylated (N-linked (GlcNAc...) asparagine). One can recognise an EF-hand 2 domain in the interval 179–211 (HHDALVEDIFDKEDEDKDGFISAREFTYKHDEL). Asp192, Asp194, Asp196, Phe198, and Glu203 together coordinate Ca(2+). The short motif at 208–211 (HDEL) is the Prevents secretion from ER element.

As to quaternary structure, monomer. Homodimer. Interacts with type III, type IV and type X collagens.

It is found in the endoplasmic reticulum lumen. The catalysed reaction is [protein]-peptidylproline (omega=180) = [protein]-peptidylproline (omega=0). Inhibited by tacrolimus/FK506. Functionally, PPIase which accelerates the folding of proteins during protein synthesis. Has a preference for substrates containing 4-hydroxylproline modifications, including type III collagen. May also target type VI and type X collagens. This chain is Peptidyl-prolyl cis-trans isomerase FKBP14 (FKBP14), found in Homo sapiens (Human).